Reading from the N-terminus, the 762-residue chain is Polymeric immunoglobulin receptor (762 aa).

Positions M1 to M18 are cleaved as a signal peptide. The region spanning K19–S120 is the Ig-like V-type 1; required for binding to polymeric IgA and IgM domain. Residues K19–K636 lie on the Extracellular side of the membrane. 2 cysteine pairs are disulfide-bonded: C40–C110 and C56–C64. 2 N-linked (GlcNAc...) asparagine glycosylation sites follow: N83 and N135. 4 Ig-like V-type domains span residues G145–V238, G251–F351, G363–V460, and P464–A563. 8 disulfide bridges follow: C152-C221, C258-C324, C272-C280, C370-C443, C384-C394, C484-C546, C488-C522, and C498-C505. Residue N291 is glycosylated (N-linked (GlcNAc...) asparagine). A glycan (N-linked (GlcNAc...) asparagine) is linked at N423. Residue N530 is glycosylated (N-linked (GlcNAc...) asparagine). The segment at F604–S634 is disordered. Residues V637–L659 traverse the membrane as a helical segment. Over R660–A762 the chain is Cytoplasmic.

As to quaternary structure, interacts (mainly via CDR1-like domain) with dimeric IgA. Interacts (mainly via CDR2-like domain) with pentameric IgM. Either free or part of the secretory IgA (sIgA) complex that consists of two, four or five IgA monomers, and two additional non-Ig polypeptides, namely the JCHAIN and the secretory component (the proteolytic product of PIGR). Free secretory component interacts with bacterial antigens toxA of C.difficile and eae of E.coli. N-glycosylated. Carries predominantly biantennary complex type glycans which are largely non-fucosylated. Sialylation with NeuAc is common, except for Asn-291 which carries exclusively high mannose glycans. N-glycans attached to Asn-83: Gal2GlcNAc2Man3GlcNAc2; Gal2GlcNAc2Man3GlcNAc2(Fuc); Gal1GlcNAc1Man4GlcNAc2(Fuc); Gal1GlcNAc1Man3GlcNAc2; Gal1GlcNAc1Man4GlcNAc2 and NeuAc1Gal2GlcNAc2Man3GlcNAc2. N-glycans attached to Asn-135: Gal2GlcNAc2Man3GlcNAc2; Gal1GlcNAc1Man3GlcNAc2 and NeuAc1Gal2GlcNAc2Man3GlcNAc2. N-glycans attached to Asn-291: Man5-8GlcNAc2. N-glycans attached to Asn-423: NeuAc1Gal2GlcNAc2Man3GlcNAc2. N-glycans attached to Asn-530: Gal2GlcNAc2Man3GlcNAc2; Gal1GlcNAc1Man3GlcNAc2 and NeuAc1Gal2GlcNAc2Man3GlcNAc2. N-glycosylation is required for anchoring IgA molecules to mucus but is not necessary for Ig binding.

Its subcellular location is the cell membrane. The protein localises to the secreted. Its function is as follows. Mediates selective transcytosis of polymeric IgA and IgM across mucosal epithelial cells. Binds polymeric IgA and IgM at the basolateral surface of epithelial cells. The complex is then transported across the cell to be secreted at the apical surface. During this process, a cleavage occurs that separates the extracellular (known as the secretory component) from the transmembrane segment. In terms of biological role, through its N-linked glycans ensures anchoring of secretory IgA (sIgA) molecules to mucus lining the epithelial surface to neutralize extracellular pathogens. On its own (free form) may act as a non-specific microbial scavenger to prevent pathogen interaction with epithelial cells. The polypeptide is Polymeric immunoglobulin receptor (PIGR) (Equus asinus (Donkey)).